The chain runs to 220 residues: Probable septum site-determining protein MinC (220 aa).

This sequence belongs to the MinC family. In terms of assembly, interacts with MinD and FtsZ.

Functionally, cell division inhibitor that blocks the formation of polar Z ring septums. Rapidly oscillates between the poles of the cell to destabilize FtsZ filaments that have formed before they mature into polar Z rings. Prevents FtsZ polymerization. The polypeptide is Probable septum site-determining protein MinC (Vibrio campbellii (strain ATCC BAA-1116)).